The primary structure comprises 378 residues: Zinc finger protein DPF3 (378 aa).

Residue Lys99 forms a Glycyl lysine isopeptide (Lys-Gly) (interchain with G-Cter in SUMO2) linkage. Residues 146-193 (LENDENVEEGNEEEDLEEDVPKRKNRTRGRARGSAGGRRRHDAASQED) are disordered. Residues 148–163 (NDENVEEGNEEEDLEE) show a composition bias toward acidic residues. Over residues 168–186 (RKNRTRGRARGSAGGRRRH) the composition is skewed to basic residues. A C2H2-type zinc finger spans residues 198–221 (YVCDICGKRYKNRPGLSYHYAHTH). The tract at residues 225–254 (EEGDEAQDQETRSPPNHRNENHRPQKGPDG) is disordered. 2 consecutive PHD-type zinc fingers follow at residues 259–319 (NNYC…CKSC) and 316–366 (CKSC…CWEL). Positions 317-332 (KSCILCGTSENDDQLL) are interaction with HDGFL2. A Phosphoserine modification is found at Gly323.

This sequence belongs to the requiem/DPF family. As to quaternary structure, component of the BAF complex, which includes at least actin (ACTB), ARID1A, ARID1B/BAF250, SMARCA2, SMARCA4/BRG1/BAF190A, ACTL6A/BAF53, ACTL6B/BAF53B, SMARCE1/BAF57, SMARCC1/BAF155, SMARCC2/BAF170, SMARCB1/SNF5/INI1, and one or more of SMARCD1/BAF60A, SMARCD2/BAF60B, or SMARCD3/BAF60C. In muscle cells, the BAF complex also contains DPF3. Interacts with acetylated histones H3 and H4. Component of neuron-specific chromatin remodeling complex (nBAF complex) composed of at least, ARID1A/BAF250A or ARID1B/BAF250B, SMARCD1/BAF60A, SMARCD3/BAF60C, SMARCA2/BRM/BAF190B, SMARCA4/BRG1/BAF190A, SMARCB1/BAF47, SMARCC1/BAF155, SMARCE1/BAF57, SMARCC2/BAF170, DPF1/BAF45B, DPF3/BAF45C, ACTL6B/BAF53B and actin. In terms of assembly, interacts with HDGFL2. Interacts with SMARCA4/BRG1/BAF190A, SMARCC1/BAF155 and SMARCD1/BAF60A. Expressed in the heart and somites. Expressed in cerebellum and spinal cord, but not in cerebral cortex. Expressed specifically in post-mitotic neurons (at protein level).

The protein localises to the nucleus. Functionally, muscle-specific component of the BAF complex, a multiprotein complex involved in transcriptional activation and repression of select genes by chromatin remodeling (alteration of DNA-nucleosome topology). Specifically binds acetylated lysines on histone 3 and 4 (H3K14ac, H3K9ac, H4K5ac, H4K8ac, H4K12ac, H4K16ac). In the complex, it acts as a tissue-specific anchor between histone acetylations and methylations and chromatin remodeling. It thereby probably plays an essential role in heart and skeletal muscle development. Belongs to the neuron-specific chromatin remodeling complex (nBAF complex). During neural development a switch from a stem/progenitor to a post-mitotic chromatin remodeling mechanism occurs as neurons exit the cell cycle and become committed to their adult state. The transition from proliferating neural stem/progenitor cells to post-mitotic neurons requires a switch in subunit composition of the npBAF and nBAF complexes. As neural progenitors exit mitosis and differentiate into neurons, npBAF complexes which contain ACTL6A/BAF53A and PHF10/BAF45A, are exchanged for homologous alternative ACTL6B/BAF53B and DPF1/BAF45B or DPF3/BAF45C subunits in neuron-specific complexes (nBAF). The npBAF complex is essential for the self-renewal/proliferative capacity of the multipotent neural stem cells. The nBAF complex along with CREST plays a role regulating the activity of genes essential for dendrite growth. Acts as a regulator of myogenesis in cooperation with HDGFL2. Mediates the interaction of HDGFL2 with the BAF complex. HDGFL2-DPF3a activate myogenic genes by increasing chromatin accessibility through recruitment of SMARCA4/BRG1/BAF190A (ATPase subunit of the BAF complex) to myogenic gene promoters. The protein is Zinc finger protein DPF3 (Dpf3) of Mus musculus (Mouse).